Reading from the N-terminus, the 395-residue chain is Flap endonuclease 1 (395 aa).

Residues Met-1 to Lys-104 are N-domain. Residue Asp-34 participates in Mg(2+) binding. Residues Arg-47 and Arg-70 each coordinate DNA. 5 residues coordinate Mg(2+): Asp-86, Glu-158, Glu-160, Asp-179, and Asp-181. Positions Glu-122–His-253 are I-domain. Glu-158 provides a ligand contact to DNA. Residues Gly-231 and Asp-233 each contribute to the DNA site. Position 233 (Asp-233) interacts with Mg(2+). An interaction with PCNA region spans residues Gln-341 to Phe-349. Basic and acidic residues predominate over residues Ala-360–Ser-389. The disordered stretch occupies residues Ala-360 to Thr-395.

The protein belongs to the XPG/RAD2 endonuclease family. FEN1 subfamily. In terms of assembly, interacts with PCNA. Three molecules of FEN1 bind to one PCNA trimer with each molecule binding to one PCNA monomer. PCNA stimulates the nuclease activity without altering cleavage specificity. It depends on Mg(2+) as a cofactor. In terms of processing, phosphorylated. Phosphorylation upon DNA damage induces relocalization to the nuclear plasma.

The protein localises to the nucleus. Its subcellular location is the nucleolus. The protein resides in the nucleoplasm. It is found in the mitochondrion. Functionally, structure-specific nuclease with 5'-flap endonuclease and 5'-3' exonuclease activities involved in DNA replication and repair. During DNA replication, cleaves the 5'-overhanging flap structure that is generated by displacement synthesis when DNA polymerase encounters the 5'-end of a downstream Okazaki fragment. It enters the flap from the 5'-end and then tracks to cleave the flap base, leaving a nick for ligation. Also involved in the long patch base excision repair (LP-BER) pathway, by cleaving within the apurinic/apyrimidinic (AP) site-terminated flap. Acts as a genome stabilization factor that prevents flaps from equilibrating into structures that lead to duplications and deletions. Also possesses 5'-3' exonuclease activity on nicked or gapped double-stranded DNA, and exhibits RNase H activity. Also involved in replication and repair of rDNA and in repairing mitochondrial DNA. The protein is Flap endonuclease 1 of Ajellomyces capsulatus (strain H143) (Darling's disease fungus).